Reading from the N-terminus, the 42-residue chain is Photosystem II reaction center protein J (42 aa).

Residues Ile-10–Phe-30 traverse the membrane as a helical segment.

The protein belongs to the PsbJ family. PSII is composed of 1 copy each of membrane proteins PsbA, PsbB, PsbC, PsbD, PsbE, PsbF, PsbH, PsbI, PsbJ, PsbK, PsbL, PsbM, PsbT, PsbX, PsbY, PsbZ, Psb30/Ycf12, at least 3 peripheral proteins of the oxygen-evolving complex and a large number of cofactors. It forms dimeric complexes.

It localises to the plastid. Its subcellular location is the chloroplast thylakoid membrane. Its function is as follows. One of the components of the core complex of photosystem II (PSII). PSII is a light-driven water:plastoquinone oxidoreductase that uses light energy to abstract electrons from H(2)O, generating O(2) and a proton gradient subsequently used for ATP formation. It consists of a core antenna complex that captures photons, and an electron transfer chain that converts photonic excitation into a charge separation. This Pleurastrum terricola (Filamentous green alga) protein is Photosystem II reaction center protein J.